The sequence spans 192 residues: MMKIGVLGLQGAVQEHVRSIEACGAEAVVVKKIEQLEEIDGLILPGGESTTMRRLMDKYGFIEPLKQFAAAGKPMFGTCAGLILLAKRIVGYDEPHLGLMDITVERNSFGRQRESFEAELSIAGVADDFIGVFIRAPHIVEVGEDVEVLAKYEGRIVAARQGQFLGCSFHPELTDDYRMTQYFLNMVKEAKA.

Position 47–49 (47–49 (GES)) interacts with L-glutamine. C79 functions as the Nucleophile in the catalytic mechanism. L-glutamine contacts are provided by residues R106 and 134 to 135 (IR). Residues H170 and E172 each act as charge relay system in the active site.

This sequence belongs to the glutaminase PdxT/SNO family. As to quaternary structure, in the presence of PdxS, forms a dodecamer of heterodimers. Only shows activity in the heterodimer.

It carries out the reaction aldehydo-D-ribose 5-phosphate + D-glyceraldehyde 3-phosphate + L-glutamine = pyridoxal 5'-phosphate + L-glutamate + phosphate + 3 H2O + H(+). The enzyme catalyses L-glutamine + H2O = L-glutamate + NH4(+). Its pathway is cofactor biosynthesis; pyridoxal 5'-phosphate biosynthesis. Catalyzes the hydrolysis of glutamine to glutamate and ammonia as part of the biosynthesis of pyridoxal 5'-phosphate. The resulting ammonia molecule is channeled to the active site of PdxS. This Geobacillus sp. (strain WCH70) protein is Pyridoxal 5'-phosphate synthase subunit PdxT.